Consider the following 257-residue polypeptide: G2/mitotic-specific cyclin S13-7 (257 aa).

Belongs to the cyclin family. Cyclin AB subfamily. As to quaternary structure, interacts with the CDC2 protein kinase to form a serine/threonine kinase holoenzyme complex also known as maturation promoting factor (MPF). The cyclin subunit imparts substrate specificity to the complex.

Its function is as follows. Essential for the control of the cell cycle at the G2/M (mitosis) transition. The protein is G2/mitotic-specific cyclin S13-7 of Glycine max (Soybean).